The following is a 577-amino-acid chain: Laccase-25 (577 aa).

A signal peptide spans 1–22 (MTLHWSLLLFIAIALVSSVAQA). Plastocyanin-like domains are found at residues 30-147 (NVGN…PRGG) and 158-313 (KEHV…YAGA). Asn-33 carries N-linked (GlcNAc...) asparagine glycosylation. Cu cation-binding residues include His-81 and His-83. N-linked (GlcNAc...) asparagine glycosylation is present at Asn-109. Cu cation contacts are provided by His-126 and His-128. N-linked (GlcNAc...) asparagine glycans are attached at residues Asn-169, Asn-203, Asn-208, Asn-218, Asn-332, Asn-383, Asn-396, Asn-404, Asn-441, and Asn-459. In terms of domain architecture, Plastocyanin-like 3 spans 423–560 (DFPDTPPVVF…AMVLEVLDGP (138 aa)). Residues His-477, His-480, His-482, His-539, Cys-540, His-541, and His-545 each contribute to the Cu cation site.

This sequence belongs to the multicopper oxidase family. Cu cation is required as a cofactor.

It localises to the secreted. Its subcellular location is the extracellular space. The protein resides in the apoplast. The catalysed reaction is 4 hydroquinone + O2 = 4 benzosemiquinone + 2 H2O. Its function is as follows. Lignin degradation and detoxification of lignin-derived products. In Oryza sativa subsp. japonica (Rice), this protein is Laccase-25 (LAC25).